Reading from the N-terminus, the 259-residue chain is Dihydroorotate dehydrogenase B (NAD(+)), electron transfer subunit (259 aa).

One can recognise an FAD-binding FR-type domain in the interval 2 to 102 (MQKQNMIVVN…LGPLGHGFPV (101 aa)). Residues 53–56 (RPIS), 70–72 (LYR), and 77–78 (GT) each bind FAD. [2Fe-2S] cluster is bound by residues cysteine 221, cysteine 226, cysteine 229, and cysteine 246.

It belongs to the PyrK family. As to quaternary structure, heterotetramer of 2 PyrK and 2 PyrD type B subunits. [2Fe-2S] cluster is required as a cofactor. FAD serves as cofactor.

It participates in pyrimidine metabolism; UMP biosynthesis via de novo pathway; orotate from (S)-dihydroorotate (NAD(+) route): step 1/1. Its function is as follows. Responsible for channeling the electrons from the oxidation of dihydroorotate from the FMN redox center in the PyrD type B subunit to the ultimate electron acceptor NAD(+). The sequence is that of Dihydroorotate dehydrogenase B (NAD(+)), electron transfer subunit from Bacillus cereus (strain 03BB102).